Reading from the N-terminus, the 429-residue chain is Gamma-glutamyl phosphate reductase (429 aa).

It belongs to the gamma-glutamyl phosphate reductase family.

Its subcellular location is the cytoplasm. The catalysed reaction is L-glutamate 5-semialdehyde + phosphate + NADP(+) = L-glutamyl 5-phosphate + NADPH + H(+). Its pathway is amino-acid biosynthesis; L-proline biosynthesis; L-glutamate 5-semialdehyde from L-glutamate: step 2/2. Functionally, catalyzes the NADPH-dependent reduction of L-glutamate 5-phosphate into L-glutamate 5-semialdehyde and phosphate. The product spontaneously undergoes cyclization to form 1-pyrroline-5-carboxylate. The sequence is that of Gamma-glutamyl phosphate reductase from Bradyrhizobium sp. (strain BTAi1 / ATCC BAA-1182).